Here is a 131-residue protein sequence, read N- to C-terminus: Large ribosomal subunit protein bL17 (131 aa).

The protein belongs to the bacterial ribosomal protein bL17 family. In terms of assembly, part of the 50S ribosomal subunit. Contacts protein L32.

The protein is Large ribosomal subunit protein bL17 of Vesicomyosocius okutanii subsp. Calyptogena okutanii (strain HA).